A 336-amino-acid chain; its full sequence is Poly(A) RNA polymerase cid12 (336 aa).

2 residues coordinate Mg(2+): Asp-77 and Asp-79. In terms of domain architecture, PAP-associated spans 209–263 (ALLQKFFYFWGVEWTYELFVLRPLTGQIVPKLQKGWLNEVQPNLLSIEDPIDRNN). Ser-325 is modified (phosphoserine). Thr-327 is modified (phosphothreonine). Ser-329 carries the phosphoserine modification.

Belongs to the DNA polymerase type-B-like family. Cid12, hrr1 and rdp1 interact forming the RNA-directed RNA polymerase complex (RDRC). The RDRC complex interacts with the RITS complex via interaction between ago1 and hrr1. Clr4 has a role in mediating this interaction. Mg(2+) is required as a cofactor. The cofactor is Mn(2+).

It localises to the cytoplasm. The protein resides in the nucleus. It carries out the reaction RNA(n) + ATP = RNA(n)-3'-adenine ribonucleotide + diphosphate. Its function is as follows. Has a role in the RNA interference (RNAi) pathway which is important for heterochromatin formation and accurate chromosome segregation. A member of the RNA-directed RNA polymerase complex (RDRC) which is involved in the generation of small interfering RNAs (siRNAs) and mediate their association with the RNA-induced transcriptional silencing (RITS) complex. RITS acts as a priming complex for dsRNA synthesis at the site of non-coding centromeric RNA. This chain is Poly(A) RNA polymerase cid12 (cid12), found in Schizosaccharomyces pombe (strain 972 / ATCC 24843) (Fission yeast).